The chain runs to 90 residues: KTLLLTLVVVTILCLDLGYTTKCYITPDVKSETCPDGENICYTKTWCDVWCGSRGRRVDLGCAATCPIVKPGVNINCCSTDNCNPFPKRS.

The signal sequence occupies residues 1 to 20 (KTLLLTLVVVTILCLDLGYT). Disulfide bonds link cysteine 23–cysteine 41, cysteine 34–cysteine 62, cysteine 47–cysteine 51, cysteine 66–cysteine 77, and cysteine 78–cysteine 83.

Belongs to the three-finger toxin family. Long-chain subfamily. Type II alpha-neurotoxin sub-subfamily. Expressed by the venom gland.

It is found in the secreted. Functionally, binds with high affinity to muscular (alpha-1/CHRNA1) and neuronal (alpha-7/CHRNA7) nicotinic acetylcholine receptor (nAChR) and inhibits acetylcholine from binding to the receptor, thereby impairing neuromuscular and neuronal transmission. The protein is Long neurotoxin OH-34 of Ophiophagus hannah (King cobra).